A 555-amino-acid chain; its full sequence is Gamma-aminobutyric acid receptor subunit alpha-4 (555 aa).

The N-terminal stretch at 1-35 (MVSAKKVPAIAMSFGVSFALLHFLCLAACLNESPG) is a signal peptide. The Extracellular segment spans residues 36 to 259 (QNQKEEKLCP…FHLRRKMGYF (224 aa)). N-linked (GlcNAc...) asparagine glycosylation is present at N47. R100 contributes to the 4-aminobutanoate binding site. 2 N-linked (GlcNAc...) asparagine glycosylation sites follow: N144 and N157. T163 serves as a coordination point for 4-aminobutanoate. A disulfide bridge links C172 with C186. The chain crosses the membrane as a helical span at residues 260–280 (MIQTYIPCIMTVILSQVSFWI). Topologically, residues 281-284 (NKES) are cytoplasmic. Residues 285 to 305 (VPARTVFGITTVLTMTTLSIS) form a helical membrane-spanning segment. Residues 306–318 (ARHSLPKVSYATA) are Extracellular-facing. Residues 319–341 (MDWFIAVCFAFVFSALIEFAAVN) traverse the membrane as a helical segment. Topologically, residues 342–518 (YFTNVQMEKA…PPPSGSGTSK (177 aa)) are cytoplasmic. Disordered regions lie at residues 354–435 (KTSK…SPNP) and 495–516 (GTSGKLSATTTPSAPPPSGSGT). Positions 410–421 (SSKSSTVVQGSS) are enriched in low complexity. Residues 422–435 (EATPQSYLASSPNP) are compositionally biased toward polar residues. A helical membrane pass occupies residues 519–545 (IDKYARILFPVTFGAFNMVYWVVYLSK). Topologically, residues 546-555 (DTMEKSESLM) are extracellular.

Belongs to the ligand-gated ion channel (TC 1.A.9) family. Gamma-aminobutyric acid receptor (TC 1.A.9.5) subfamily. GABRA4 sub-subfamily. As to quaternary structure, heteropentamer, formed by a combination of alpha (GABRA1-6), beta (GABRB1-3), gamma (GABRG1-3), delta (GABRD), epsilon (GABRE), rho (GABRR1-3), pi (GABRP) and theta (GABRQ) chains, each subunit exhibiting distinct physiological and pharmacological properties. As to expression, expressed in the brain.

The protein resides in the cell membrane. Its subcellular location is the postsynaptic cell membrane. The catalysed reaction is chloride(in) = chloride(out). Potentiated by histamine. Its function is as follows. Alpha subunit of the heteropentameric ligand-gated chloride channel gated by gamma-aminobutyric acid (GABA), a major inhibitory neurotransmitter in the brain. GABA-gated chloride channels, also named GABA(A) receptors (GABAAR), consist of five subunits arranged around a central pore and contain GABA active binding site(s) located at the alpha and beta subunit interface(s). When activated by GABA, GABAARs selectively allow the flow of chloride anions across the cell membrane down their electrochemical gradient. GABAARs containing alpha-4 are predominantly extrasynaptic, contributing to tonic inhibition in dentate granule cells and thalamic relay neurons. Extrasynaptic alpha-4-containing GABAARs control levels of excitability and network activity. GABAARs containing alpha-4 are often found with the delta or gamma-2 subunits, in combination with beta subunits. GABAAR containing alpha-4-beta-3-delta subunits can simultaneously bind GABA and histamine where histamine binds at the interface of two neighboring beta subunits, which may be involved in the regulation of sleep and wakefulness. The polypeptide is Gamma-aminobutyric acid receptor subunit alpha-4 (GABRA4) (Bos taurus (Bovine)).